Here is a 72-residue protein sequence, read N- to C-terminus: uncharacterized protein (72 aa).

The tract at residues 52–72 is disordered; the sequence is KGGRQRDEAVGVEELCKQHKE. Positions 55 to 72 are enriched in basic and acidic residues; it reads RQRDEAVGVEELCKQHKE.

Belongs to the YiiE family.

This is an uncharacterized protein from Escherichia coli O6:H1 (strain CFT073 / ATCC 700928 / UPEC).